Here is a 345-residue protein sequence, read N- to C-terminus: Gibberellin receptor GID1A (345 aa).

Position 2 is an N-acetylalanine (alanine 2). The short motif at 113 to 115 (HGG) is the Involved in the stabilization of the negatively charged intermediate by the formation of the oxyanion hole element. Gibberellin A4 contacts are provided by residues 115-116 (GS), tyrosine 127, and serine 191. Positions 116, 127, 191, and 238 each coordinate gibberellin A3. Serine 191 is an active-site residue. Residue aspartate 289 is part of the active site. Glycine 320 serves as a coordination point for gibberellin A4. Glycine 320 contacts gibberellin A3.

This sequence belongs to the 'GDXG' lipolytic enzyme family. In terms of assembly, interacts (via N-terminus) with the DELLA proteins GAI, RGA, RGL1, RGL2 and RGL3 (via N-terminus) in a GA-dependent manner. Widely expressed.

Its subcellular location is the nucleus. Its function is as follows. Functions as a soluble gibberellin (GA) receptor. GA is an essential hormone that regulates growth and development in plants. Binds with high affinity the biologically active gibberellin GA4, but has no affinity for the biologically inactive GAs. In response to GA, interacts with specific DELLA proteins, known as repressors of GA-induced growth, and targets them for degradation via proteasome. Seems to be required for GA signaling that controls root growth, seed germination, stem elongation and flower development. Partially redundant with GID1B and GID1C. The sequence is that of Gibberellin receptor GID1A (GID1A) from Arabidopsis thaliana (Mouse-ear cress).